The primary structure comprises 177 residues: MNMCTDGKKYHSTATSAAVGASAPGVPDARAIAAICEQLRRHVADLGVLYIKLHNYHWHIYGIEFKQVHELLEEYYVSVTEAFDTIAERLLQLGAQAPASMAEYLALSGIAEETEKEITIVSALARVKRDFEYLSTRFSQTQVLAAESGDAVTDGIITDILRTLGKAIWMLGATLKA.

The protein belongs to the Dps family. In terms of assembly, homodecamer.

This Treponema pallidum subsp. pertenue (Yaws treponeme) protein is Antigen TyF1.